The primary structure comprises 430 residues: Tyrosine--tRNA ligase (430 aa).

Y32 contributes to the L-tyrosine binding site. The short motif at 37-46 is the 'HIGH' region element; the sequence is PTADSLHIGH. L-tyrosine is bound by residues Y172 and Q176. Positions 232–236 match the 'KMSKS' region motif; that stretch reads KFGKT. Position 235 (K235) interacts with ATP. Residues 362-429 form the S4 RNA-binding domain; the sequence is VKAVDLFVDN…GKKNYYLIIA (68 aa).

The protein belongs to the class-I aminoacyl-tRNA synthetase family. TyrS type 1 subfamily. Homodimer.

The protein localises to the cytoplasm. The enzyme catalyses tRNA(Tyr) + L-tyrosine + ATP = L-tyrosyl-tRNA(Tyr) + AMP + diphosphate + H(+). Catalyzes the attachment of tyrosine to tRNA(Tyr) in a two-step reaction: tyrosine is first activated by ATP to form Tyr-AMP and then transferred to the acceptor end of tRNA(Tyr). This is Tyrosine--tRNA ligase from Bacteroides fragilis (strain ATCC 25285 / DSM 2151 / CCUG 4856 / JCM 11019 / LMG 10263 / NCTC 9343 / Onslow / VPI 2553 / EN-2).